The following is a 439-amino-acid chain: Paraneoplastic antigen-like protein 8A (439 aa).

Residues 213–439 form a disordered region; the sequence is ETPNNWNATE…RRATNESRKV (227 aa). Residues 231–249 are compositionally biased toward basic residues; sequence LVRRAGAKSRSRRKKQKKN. Residues 403 to 419 show a composition bias toward polar residues; that stretch reads KAPQGQQPAEATASTSR. Positions 423–439 are enriched in basic and acidic residues; the sequence is AKPEGSPRRATNESRKV.

The protein belongs to the PNMA family.

The chain is Paraneoplastic antigen-like protein 8A (PNMA8A) from Pongo abelii (Sumatran orangutan).